Here is a 355-residue protein sequence, read N- to C-terminus: Probable aldo-keto reductase 3 (355 aa).

Tyr-70 serves as the catalytic Proton donor. His-138 lines the substrate pocket. 217–227 (SPLGRGFFSSG) contributes to the NADP(+) binding site.

Belongs to the aldo/keto reductase family.

The polypeptide is Probable aldo-keto reductase 3 (Oryza sativa subsp. japonica (Rice)).